Consider the following 329-residue polypeptide: Ribosomal RNA small subunit methyltransferase H (329 aa).

Residues G34–Y36, D52, F79, D100, and Q107 each bind S-adenosyl-L-methionine. Positions G285–G329 are disordered.

Belongs to the methyltransferase superfamily. RsmH family.

It is found in the cytoplasm. The catalysed reaction is cytidine(1402) in 16S rRNA + S-adenosyl-L-methionine = N(4)-methylcytidine(1402) in 16S rRNA + S-adenosyl-L-homocysteine + H(+). Functionally, specifically methylates the N4 position of cytidine in position 1402 (C1402) of 16S rRNA. This chain is Ribosomal RNA small subunit methyltransferase H, found in Bradyrhizobium diazoefficiens (strain JCM 10833 / BCRC 13528 / IAM 13628 / NBRC 14792 / USDA 110).